The primary structure comprises 207 residues: Large ribosomal subunit protein uL4 (207 aa).

The tract at residues 49–78 (HAVKNRSAVSGGGRKPWRQKGTGRARQGSI) is disordered.

It belongs to the universal ribosomal protein uL4 family. As to quaternary structure, part of the 50S ribosomal subunit.

Functionally, one of the primary rRNA binding proteins, this protein initially binds near the 5'-end of the 23S rRNA. It is important during the early stages of 50S assembly. It makes multiple contacts with different domains of the 23S rRNA in the assembled 50S subunit and ribosome. Forms part of the polypeptide exit tunnel. The polypeptide is Large ribosomal subunit protein uL4 (Streptococcus uberis (strain ATCC BAA-854 / 0140J)).